The sequence spans 252 residues: Mannose-P-dolichol utilization defect 1 protein homolog (252 aa).

One can recognise a PQ-loop 1 domain in the interval 34–100; it reads KALLSKGLGL…HGYPFSAWGD (67 aa). The next 7 helical transmembrane spans lie at 41 to 61, 69 to 89, 98 to 118, 126 to 146, 148 to 168, 180 to 200, and 207 to 227; these read LGLAIIAGSVLVKVPQVLKIL, INIVGVVLDLLAISFHLSYNF, WGDSTFLAIQTVTIAVLVLFF, GLFLVGYVVLMYVLNSGLTPM, VLFTIQSCNIPILLVGKLSQA, LSAATVIMMFAGSVARIFTSI, and MIILTFIASTFANSVILGQLI. The PQ-loop 2 domain maps to 157–211; that stretch reads IPILLVGKLSQAYTNYQAGSTGQLSAATVIMMFAGSVARIFTSIQETGDFMIILT.

The protein belongs to the MPDU1 (TC 2.A.43.3) family.

The protein localises to the membrane. This is Mannose-P-dolichol utilization defect 1 protein homolog from Drosophila melanogaster (Fruit fly).